A 207-amino-acid polypeptide reads, in one-letter code: 3-demethoxyubiquinol 3-hydroxylase (207 aa).

Fe cation is bound by residues Glu56, Glu86, His89, Glu138, Glu170, and His173.

This sequence belongs to the COQ7 family. Requires Fe cation as cofactor.

Its subcellular location is the cell membrane. The catalysed reaction is a 5-methoxy-2-methyl-3-(all-trans-polyprenyl)benzene-1,4-diol + AH2 + O2 = a 3-demethylubiquinol + A + H2O. Its pathway is cofactor biosynthesis; ubiquinone biosynthesis. Catalyzes the hydroxylation of 2-nonaprenyl-3-methyl-6-methoxy-1,4-benzoquinol during ubiquinone biosynthesis. The chain is 3-demethoxyubiquinol 3-hydroxylase from Cupriavidus pinatubonensis (strain JMP 134 / LMG 1197) (Cupriavidus necator (strain JMP 134)).